A 407-amino-acid polypeptide reads, in one-letter code: Nicotinate phosphoribosyltransferase (407 aa).

H228 carries the phosphohistidine; by autocatalysis modification.

Belongs to the NAPRTase family. Transiently phosphorylated on a His residue during the reaction cycle. Phosphorylation strongly increases the affinity for substrates and increases the rate of nicotinate D-ribonucleotide production. Dephosphorylation regenerates the low-affinity form of the enzyme, leading to product release.

It carries out the reaction nicotinate + 5-phospho-alpha-D-ribose 1-diphosphate + ATP + H2O = nicotinate beta-D-ribonucleotide + ADP + phosphate + diphosphate. It functions in the pathway cofactor biosynthesis; NAD(+) biosynthesis; nicotinate D-ribonucleotide from nicotinate: step 1/1. Its activity is regulated as follows. 100-fold more active in the presence of saturating ATP. Catalyzes the synthesis of beta-nicotinate D-ribonucleotide from nicotinate and 5-phospho-D-ribose 1-phosphate at the expense of ATP. Functions in the deamidating salvage pathway for production of NAD from nicotinamide. Displays a strict preference for nicotinate over nicotinamide substrate. This chain is Nicotinate phosphoribosyltransferase, found in Acinetobacter baylyi (strain ATCC 33305 / BD413 / ADP1).